The following is a 132-amino-acid chain: Small ribosomal subunit protein uS8 (132 aa).

This sequence belongs to the universal ribosomal protein uS8 family. Part of the 30S ribosomal subunit. Contacts proteins S5 and S12.

One of the primary rRNA binding proteins, it binds directly to 16S rRNA central domain where it helps coordinate assembly of the platform of the 30S subunit. This Streptococcus suis (strain 98HAH33) protein is Small ribosomal subunit protein uS8.